A 245-amino-acid polypeptide reads, in one-letter code: Uridylate kinase (245 aa).

Residue 13–16 participates in ATP binding; it reads KLSG. A UMP-binding site is contributed by Gly56. The ATP site is built by Gly57 and Arg61. Residues Asp76 and 138–145 each bind UMP; that span reads TGRPFFTT. The ATP site is built by Asn166, Tyr172, and Asp175.

Belongs to the UMP kinase family. Homohexamer.

It is found in the cytoplasm. It catalyses the reaction UMP + ATP = UDP + ADP. It participates in pyrimidine metabolism; CTP biosynthesis via de novo pathway; UDP from UMP (UMPK route): step 1/1. With respect to regulation, inhibited by UTP. Functionally, catalyzes the reversible phosphorylation of UMP to UDP. This chain is Uridylate kinase, found in Mycoplasma mobile (strain ATCC 43663 / 163K / NCTC 11711) (Mesomycoplasma mobile).